The sequence spans 206 residues: Ras-related protein Ral-A (206 aa).

Residues 24-29 (GVGKSA), 40-46 (VEDYEPT), and 127-130 (NKSD) each bind GTP. The Effector region signature appears at 43-51 (YEPTKADSY). Thr46 carries a (Microbial infection) O-linked (Glc) threonine; by P.sordellii toxin TcsL glycan. A Phosphoserine; by AURKA modification is found at Ser194. Cys203 bears the Cysteine methyl ester mark. A lipid anchor (S-geranylgeranyl cysteine) is attached at Cys203. Positions 204 to 206 (CIL) are cleaved as a propeptide — removed in mature form.

The protein belongs to the small GTPase superfamily. Ras family. Interacts (via effector domain) with RALBP1; during mitosis, recruits RALBP1 to the mitochondrion where it promotes DNM1L phosphorylation and mitochondrial fission. Interacts with EXOC2/Sec5 and EXOC8/Exo84; binding to EXOC2 and EXOC8 is mutually exclusive. Interacts with Clostridium exoenzyme C3. Interacts with RALGPS1. Interacts with LPAR1 and LPAR2. Interacts with GRK2 in response to LPAR1 activation. RALA and GRK2 binding to LPAR1 is mutually exclusive. Interacts with CDC42. Phosphorylated. Phosphorylation at Ser-194 by AURKA/Aurora kinase A, during mitosis, induces RALA localization to the mitochondrion where it regulates mitochondrial fission. Post-translationally, prenylation is essential for membrane localization. The geranylgeranylated form and the farnesylated mutant do not undergo alternative prenylation in response to geranylgeranyltransferase I inhibitors (GGTIs) and farnesyltransferase I inhibitors (FTIs). In terms of processing, (Microbial infection) Glucosylated at Thr-46 by P.sordellii toxin TcsL from strain 6018. Monoglucosylation completely prevents the recognition of the downstream effector, blocking the GTPases in their inactive form. Not glucosylated by TcsL from strain VPI 9048.

It localises to the cell membrane. Its subcellular location is the cleavage furrow. The protein resides in the midbody. The protein localises to the midbody ring. It is found in the mitochondrion. The catalysed reaction is GTP + H2O = GDP + phosphate + H(+). Alternates between an inactive form bound to GDP and an active form bound to GTP. Activated by a guanine nucleotide-exchange factor (GEF) and inactivated by a GTPase-activating protein (GAP). Multifunctional GTPase involved in a variety of cellular processes including gene expression, cell migration, cell proliferation, oncogenic transformation and membrane trafficking. Accomplishes its multiple functions by interacting with distinct downstream effectors. Acts as a GTP sensor for GTP-dependent exocytosis of dense core vesicles. The RALA-exocyst complex regulates integrin-dependent membrane raft exocytosis and growth signaling. Key regulator of LPAR1 signaling and competes with GRK2 for binding to LPAR1 thus affecting the signaling properties of the receptor. Required for anchorage-independent proliferation of transformed cells. During mitosis, supports the stabilization and elongation of the intracellular bridge between dividing cells. Cooperates with EXOC2 to recruit other components of the exocyst to the early midbody. During mitosis, also controls mitochondrial fission by recruiting to the mitochondrion RALBP1, which mediates the phosphorylation and activation of DNM1L by the mitotic kinase cyclin B-CDK1. In Homo sapiens (Human), this protein is Ras-related protein Ral-A (RALA).